Reading from the N-terminus, the 218-residue chain is Large ribosomal subunit protein uL1 (218 aa).

It belongs to the universal ribosomal protein uL1 family. Part of the 50S ribosomal subunit.

Its function is as follows. Binds directly to 23S rRNA. Probably involved in E site tRNA release. Protein L1 is also a translational repressor protein, it controls the translation of its operon by binding to its mRNA. This chain is Large ribosomal subunit protein uL1, found in Metallosphaera sedula (strain ATCC 51363 / DSM 5348 / JCM 9185 / NBRC 15509 / TH2).